Reading from the N-terminus, the 161-residue chain is Dehydrin DHN3 (161 aa).

A compositionally biased stretch (basic and acidic residues) spans 1–12; sequence MEHGHATNRVDE. The interval 1–161 is disordered; the sequence is MEHGHATNRV…KIKEKLPGQH (161 aa). Positions 20–38 are enriched in gly residues; the sequence is HGVGTGMGAHGGVGTGAAA. 2 stretches are compositionally biased toward low complexity: residues 93–107 and 115–130; these read DQQQTGGTYGQHGHT and HGATATGGTYGQQGHT. Repeat copies occupy residues 101–123 and 124–144. A 2 X approximate tandem repeats region spans residues 101–144; it reads YGQHGHTGMTGTGEHGATATGGTYGQQGHTGMTGTGAHGTDGTG. The span at 131–142 shows a compositional bias: gly residues; the sequence is GMTGTGAHGTDG. Residues 143 to 161 are compositionally biased toward basic and acidic residues; that stretch reads TGEKKGIMDKIKEKLPGQH.

Belongs to the plant dehydrin family.

The sequence is that of Dehydrin DHN3 (DHN3) from Hordeum vulgare (Barley).